The sequence spans 549 residues: Manganese transporter SMF2 (549 aa).

The disordered stretch occupies residues 1-23 (MTSQEYEPIQWSDESQTNNDSVN). Residues 12–22 (SDESQTNNDSV) show a composition bias toward polar residues. 8 helical membrane passes run 91–109 (LLFS…QYLC), 130–147 (FGLN…IIAT), 161–185 (ILFH…LLAY), 196–214 (IFEA…CFTV), 312–332 (LLIS…IVSG), 350–372 (IYNL…ALLF), 432–452 (ASQV…LYFT), and 521–541 (VLAI…LLGF).

It belongs to the NRAMP family.

Its subcellular location is the vacuole lumen. The protein resides in the vesicle. The protein localises to the cell membrane. It catalyses the reaction Mn(2+)(in) = Mn(2+)(out). Its function is as follows. High-affinity manganese transporter involved in manganese uptake from the extracellular environment. In Saccharomyces cerevisiae (strain ATCC 204508 / S288c) (Baker's yeast), this protein is Manganese transporter SMF2 (SMF2).